Here is a 259-residue protein sequence, read N- to C-terminus: Phosphatidylglycerol--prolipoprotein diacylglyceryl transferase (259 aa).

The next 4 helical transmembrane spans lie at 9 to 29, 47 to 67, 83 to 103, and 109 to 129; these read IGPF…VLAV, IDFI…YYVI, IWNG…VLFI, and VLNP…AQAI. Residue Arg131 coordinates a 1,2-diacyl-sn-glycero-3-phospho-(1'-sn-glycerol). 3 helical membrane-spanning segments follow: residues 167 to 187, 194 to 214, and 227 to 247; these read MPTF…ICYL, LLEG…RFVI, and LRVS…FVIL.

Belongs to the Lgt family.

It is found in the cell membrane. The enzyme catalyses L-cysteinyl-[prolipoprotein] + a 1,2-diacyl-sn-glycero-3-phospho-(1'-sn-glycerol) = an S-1,2-diacyl-sn-glyceryl-L-cysteinyl-[prolipoprotein] + sn-glycerol 1-phosphate + H(+). Its pathway is protein modification; lipoprotein biosynthesis (diacylglyceryl transfer). Catalyzes the transfer of the diacylglyceryl group from phosphatidylglycerol to the sulfhydryl group of the N-terminal cysteine of a prolipoprotein, the first step in the formation of mature lipoproteins. The polypeptide is Phosphatidylglycerol--prolipoprotein diacylglyceryl transferase (Streptococcus uberis (strain ATCC BAA-854 / 0140J)).